The primary structure comprises 119 residues: Basic phospholipase A2 acanthin-1 (119 aa).

7 cysteine pairs are disulfide-bonded: C11-C71, C27-C118, C29-C45, C44-C99, C51-C92, C60-C85, and C78-C90. 3 residues coordinate Ca(2+): Y28, G30, and G32. H48 is a catalytic residue. D49 contributes to the Ca(2+) binding site. D93 is a catalytic residue.

The cofactor is Ca(2+). Expressed by the venom gland.

Its subcellular location is the secreted. It carries out the reaction a 1,2-diacyl-sn-glycero-3-phosphocholine + H2O = a 1-acyl-sn-glycero-3-phosphocholine + a fatty acid + H(+). In terms of biological role, snake venom phospholipase A2 (PLA2) that potently inhibits ADP-(IC(50)=10 nM) and collagen-induced (IC(50)=7 nM) platelet aggregation when tested on human whole blood. PLA2 catalyzes the calcium-dependent hydrolysis of the 2-acyl groups in 3-sn-phosphoglycerides. The sequence is that of Basic phospholipase A2 acanthin-1 from Acanthophis antarcticus (Common death adder).